We begin with the raw amino-acid sequence, 426 residues long: Serine--tRNA ligase (426 aa).

L-serine is bound at residue 235–237; sequence TAE. Residue 266 to 268 participates in ATP binding; sequence RRE. Glu-289 lines the L-serine pocket. Residue 353 to 356 coordinates ATP; sequence EISS. Ser-389 contributes to the L-serine binding site.

The protein belongs to the class-II aminoacyl-tRNA synthetase family. Type-1 seryl-tRNA synthetase subfamily. Homodimer. The tRNA molecule binds across the dimer.

It localises to the cytoplasm. The catalysed reaction is tRNA(Ser) + L-serine + ATP = L-seryl-tRNA(Ser) + AMP + diphosphate + H(+). It catalyses the reaction tRNA(Sec) + L-serine + ATP = L-seryl-tRNA(Sec) + AMP + diphosphate + H(+). It participates in aminoacyl-tRNA biosynthesis; selenocysteinyl-tRNA(Sec) biosynthesis; L-seryl-tRNA(Sec) from L-serine and tRNA(Sec): step 1/1. Functionally, catalyzes the attachment of serine to tRNA(Ser). Is also able to aminoacylate tRNA(Sec) with serine, to form the misacylated tRNA L-seryl-tRNA(Sec), which will be further converted into selenocysteinyl-tRNA(Sec). In Trichormus variabilis (strain ATCC 29413 / PCC 7937) (Anabaena variabilis), this protein is Serine--tRNA ligase.